The primary structure comprises 74 residues: Translation initiation factor IF-1 (74 aa).

Positions 1-72 (MGKEDVIRME…TRGRIVYRKK (72 aa)) constitute an S1-like domain.

It belongs to the IF-1 family. Component of the 30S ribosomal translation pre-initiation complex which assembles on the 30S ribosome in the order IF-2 and IF-3, IF-1 and N-formylmethionyl-tRNA(fMet); mRNA recruitment can occur at any time during PIC assembly.

The protein resides in the cytoplasm. In terms of biological role, one of the essential components for the initiation of protein synthesis. Stabilizes the binding of IF-2 and IF-3 on the 30S subunit to which N-formylmethionyl-tRNA(fMet) subsequently binds. Helps modulate mRNA selection, yielding the 30S pre-initiation complex (PIC). Upon addition of the 50S ribosomal subunit IF-1, IF-2 and IF-3 are released leaving the mature 70S translation initiation complex. In Thermotoga maritima (strain ATCC 43589 / DSM 3109 / JCM 10099 / NBRC 100826 / MSB8), this protein is Translation initiation factor IF-1.